We begin with the raw amino-acid sequence, 68 residues long: DNA-directed RNA polymerase subunit omega (68 aa).

Belongs to the RNA polymerase subunit omega family. The RNAP catalytic core consists of 2 alpha, 1 beta, 1 beta' and 1 omega subunit. When a sigma factor is associated with the core the holoenzyme is formed, which can initiate transcription.

It catalyses the reaction RNA(n) + a ribonucleoside 5'-triphosphate = RNA(n+1) + diphosphate. Its function is as follows. Promotes RNA polymerase assembly. Latches the N- and C-terminal regions of the beta' subunit thereby facilitating its interaction with the beta and alpha subunits. This Desulforapulum autotrophicum (strain ATCC 43914 / DSM 3382 / VKM B-1955 / HRM2) (Desulfobacterium autotrophicum) protein is DNA-directed RNA polymerase subunit omega.